Reading from the N-terminus, the 122-residue chain is Large ribosomal subunit protein uL14 (122 aa).

This sequence belongs to the universal ribosomal protein uL14 family. As to quaternary structure, part of the 50S ribosomal subunit. Forms a cluster with proteins L3 and L19. In the 70S ribosome, L14 and L19 interact and together make contacts with the 16S rRNA in bridges B5 and B8.

Functionally, binds to 23S rRNA. Forms part of two intersubunit bridges in the 70S ribosome. This chain is Large ribosomal subunit protein uL14, found in Clostridium botulinum (strain 657 / Type Ba4).